A 631-amino-acid polypeptide reads, in one-letter code: Sphingomyelin phosphodiesterase (631 aa).

Residues 1–23 (MPRYGASLRQSCPRSGREQGQDG) are disordered. The N-terminal stretch at 1–46 (MPRYGASLRQSCPRSGREQGQDGTAGAPGLLWMGLVLALALALALA) is a signal peptide. Residues 87-171 (GNLTCPICKG…LLGSTCGHWD (85 aa)) enclose the Saposin B-type domain. A glycan (N-linked (GlcNAc...) asparagine) is linked at N88. 3 disulfides stabilise this stretch: C91/C167, C94/C159, and C122/C133. N-linked (GlcNAc...) asparagine glycosylation is present at N177. Residues D208 and H210 each contribute to the Zn(2+) site. 2 disulfides stabilise this stretch: C223–C228 and C229–C252. Positions 280 and 320 each coordinate Zn(2+). 2 N-linked (GlcNAc...) asparagine glycosylation sites follow: N337 and N397. The cysteines at positions 387 and 433 are disulfide-linked. 3 residues coordinate Zn(2+): H427, H459, and H461. The N-linked (GlcNAc...) asparagine glycan is linked to N505. Phosphoserine; by PKC/PRKCD is present on S510. An N-linked (GlcNAc...) asparagine glycan is attached at N522. Intrachain disulfides connect C586/C590 and C596/C609.

The protein belongs to the acid sphingomyelinase family. As to quaternary structure, monomer. Interacts with SORT1; the interaction is required for SMPD1 targeting to lysosomes. Zn(2+) is required as a cofactor. In terms of processing, proteolytically processed. Mature lysosomal form arises from C-terminal proteolytic processing of pro-sphingomyelin phosphodiesterase. This form is generated following cleavage by CASP7 in the extracellular milieu. It shows increased activity. Post-translationally, both lysosomal and secreted forms are glycosylated but they show a differential pattern of glycosylation. In terms of processing, phosphorylated at Ser-510 by PRKCD upon stress stimuli. Phosphorylation is required for secretion.

Its subcellular location is the lysosome. The protein localises to the lipid droplet. It localises to the secreted. It is found in the extracellular space. The enzyme catalyses a sphingomyelin + H2O = phosphocholine + an N-acylsphing-4-enine + H(+). It carries out the reaction N-(octadecanoyl)-sphing-4-enine-1-phosphocholine + H2O = N-octadecanoylsphing-4-enine + phosphocholine + H(+). The catalysed reaction is 1,2-dihexadecanoyl-sn-glycero-3-phosphocholine + H2O = 1,2-dihexadecanoyl-sn-glycerol + phosphocholine + H(+). It catalyses the reaction a 1,2-diacyl-sn-glycero-3-phosphocholine + H2O = phosphocholine + a 1,2-diacyl-sn-glycerol + H(+). Its activity is regulated as follows. Hydrolysis of liposomal sphingomyelin is stimulated by incorporation of diacylglycerol (DAG), ceramide and free fatty acids into the liposomal membranes. Phosphatidylcholine hydrolysis is inhibited by incorporation of cholesterol, ceramide, DAG, monoacylglycerol and fatty acids. Antidepressants, namely amitriptyline, imipramine, desipramine, fluoxetine, sertraline, escitalopram, and maprotiline inhibit sphingomyelin phosphodiesterase activity. (Microbial infection) The secretory form is activated by P.aeruginosa, this activation results in the release of ceramide in the outer leaflet of the plasma membrane. With respect to regulation, (Microbial infection) The secretory form is activated by human coronavirus SARS-CoV-2, this activation results in the release of ceramide in the outer leaflet of the plasma membrane. Its function is as follows. Converts sphingomyelin to ceramide. Exists as two enzymatic forms that arise from alternative trafficking of a single protein precursor, one that is targeted to the endolysosomal compartment, whereas the other is released extracellularly. However, in response to various forms of stress, lysosomal exocytosis may represent a major source of the secretory form. Functionally, in the lysosomes, converts sphingomyelin to ceramide. Plays an important role in the export of cholesterol from the intraendolysosomal membranes. Also has phospholipase C activities toward 1,2-diacylglycerolphosphocholine and 1,2-diacylglycerolphosphoglycerol. Modulates stress-induced apoptosis through the production of ceramide. When secreted, modulates cell signaling with its ability to reorganize the plasma membrane by converting sphingomyelin to ceramide. Secreted form is increased in response to stress and inflammatory mediators such as IL1B, IFNG or TNF as well as upon infection with bacteria and viruses. Produces the release of ceramide in the outer leaflet of the plasma membrane playing a central role in host defense. Ceramide reorganizes these rafts into larger signaling platforms that are required to internalize P.aeruginosa, induce apoptosis and regulate the cytokine response in infected cells. In wounded cells, the lysosomal form is released extracellularly in the presence of Ca(2+) and promotes endocytosis and plasma membrane repair. In terms of biological role, this form is generated following cleavage by CASP7 in the extracellular milieu in response to bacterial infection. It shows increased ability to convert sphingomyelin to ceramide and promotes plasma membrane repair. Plasma membrane repair by ceramide counteracts the action of gasdermin-D (GSDMD) perforin (PRF1) pores that are formed in response to bacterial infection. Its function is as follows. (Microbial infection) Secretion is activated by bacteria such as P.aeruginosa, N.gonorrhoeae and others, this activation results in the release of ceramide in the outer leaflet of the plasma membrane which facilitates the infection. Functionally, (Microbial infection) Secretion is activated by human coronaviruses SARS-CoV and SARS-CoV-2 as well as Zaire ebolavirus, this activation results in the release of ceramide in the outer leaflet of the plasma membrane which facilitates the infection. Lacks residues that bind the cofactor Zn(2+) and has no enzyme activity. The chain is Sphingomyelin phosphodiesterase from Homo sapiens (Human).